The primary structure comprises 284 residues: Pseudopaline exporter CntI (284 aa).

A run of 10 helical transmembrane segments spans residues 2–22 (VLDL…TFSV), 34–54 (LPAA…IYLL), 74–94 (GVMG…IPLA), 96–116 (ASIL…LFLG), 122–142 (AVYW…KPFS), 147–167 (SVYA…SVAI), 179–199 (IVFY…WNDF), 209–229 (GLLL…TRAF), 236–256 (IVAV…WLFW), and 259–279 (VPDA…IALS). EamA domains are found at residues 8 to 138 (SGVL…LMIV) and 151 to 279 (VVGL…IALS).

This sequence belongs to the EamA transporter family.

It localises to the cell inner membrane. Functionally, transports the metallophore pseudopaline, which is involved in the acquisition of nickel and zinc, and thus enables bacterial growth inside the host, where metal access is limited. Is probably involved in the export of pseudopaline. Essential for iron acquisition during the interaction with airway mucus secretions (AMS). The protein is Pseudopaline exporter CntI of Pseudomonas aeruginosa (strain ATCC 15692 / DSM 22644 / CIP 104116 / JCM 14847 / LMG 12228 / 1C / PRS 101 / PAO1).